The following is a 491-amino-acid chain: Probable glycine dehydrogenase (decarboxylating) subunit 2 (491 aa).

Residue K273 is modified to N6-(pyridoxal phosphate)lysine.

This sequence belongs to the GcvP family. C-terminal subunit subfamily. As to quaternary structure, the glycine cleavage system is composed of four proteins: P, T, L and H. In this organism, the P 'protein' is a heterodimer of two subunits. The cofactor is pyridoxal 5'-phosphate.

It carries out the reaction N(6)-[(R)-lipoyl]-L-lysyl-[glycine-cleavage complex H protein] + glycine + H(+) = N(6)-[(R)-S(8)-aminomethyldihydrolipoyl]-L-lysyl-[glycine-cleavage complex H protein] + CO2. Functionally, the glycine cleavage system catalyzes the degradation of glycine. The P protein binds the alpha-amino group of glycine through its pyridoxal phosphate cofactor; CO(2) is released and the remaining methylamine moiety is then transferred to the lipoamide cofactor of the H protein. The chain is Probable glycine dehydrogenase (decarboxylating) subunit 2 from Bacillus cereus (strain B4264).